Reading from the N-terminus, the 259-residue chain is Thiazole synthase (259 aa).

Residue Lys99 is the Schiff-base intermediate with DXP of the active site. 1-deoxy-D-xylulose 5-phosphate is bound by residues Gly161, 187-188 (AG), and 209-210 (NT).

It belongs to the ThiG family. As to quaternary structure, homotetramer. Forms heterodimers with either ThiH or ThiS.

Its subcellular location is the cytoplasm. It carries out the reaction [ThiS sulfur-carrier protein]-C-terminal-Gly-aminoethanethioate + 2-iminoacetate + 1-deoxy-D-xylulose 5-phosphate = [ThiS sulfur-carrier protein]-C-terminal Gly-Gly + 2-[(2R,5Z)-2-carboxy-4-methylthiazol-5(2H)-ylidene]ethyl phosphate + 2 H2O + H(+). Its pathway is cofactor biosynthesis; thiamine diphosphate biosynthesis. Its function is as follows. Catalyzes the rearrangement of 1-deoxy-D-xylulose 5-phosphate (DXP) to produce the thiazole phosphate moiety of thiamine. Sulfur is provided by the thiocarboxylate moiety of the carrier protein ThiS. In vitro, sulfur can be provided by H(2)S. The chain is Thiazole synthase from Sulfurimonas denitrificans (strain ATCC 33889 / DSM 1251) (Thiomicrospira denitrificans (strain ATCC 33889 / DSM 1251)).